Reading from the N-terminus, the 294-residue chain is Bifunctional protein FolD (294 aa).

NADP(+) contacts are provided by residues 175-177 (GVS) and isoleucine 243.

This sequence belongs to the tetrahydrofolate dehydrogenase/cyclohydrolase family. Homodimer.

The catalysed reaction is (6R)-5,10-methylene-5,6,7,8-tetrahydrofolate + NADP(+) = (6R)-5,10-methenyltetrahydrofolate + NADPH. The enzyme catalyses (6R)-5,10-methenyltetrahydrofolate + H2O = (6R)-10-formyltetrahydrofolate + H(+). It participates in one-carbon metabolism; tetrahydrofolate interconversion. Catalyzes the oxidation of 5,10-methylenetetrahydrofolate to 5,10-methenyltetrahydrofolate and then the hydrolysis of 5,10-methenyltetrahydrofolate to 10-formyltetrahydrofolate. This chain is Bifunctional protein FolD, found in Xanthomonas campestris pv. campestris (strain 8004).